The sequence spans 524 residues: Peptide chain release factor 3 (524 aa).

The region spanning 9-275 (QRRRTFAIIS…AVVELSPPPL (267 aa)) is the tr-type G domain. Residues 18 to 25 (SHPDAGKT), 86 to 90 (DTPGH), and 140 to 143 (NKLD) contribute to the GTP site.

This sequence belongs to the TRAFAC class translation factor GTPase superfamily. Classic translation factor GTPase family. PrfC subfamily.

The protein resides in the cytoplasm. Functionally, increases the formation of ribosomal termination complexes and stimulates activities of RF-1 and RF-2. It binds guanine nucleotides and has strong preference for UGA stop codons. It may interact directly with the ribosome. The stimulation of RF-1 and RF-2 is significantly reduced by GTP and GDP, but not by GMP. This chain is Peptide chain release factor 3, found in Methylobacillus flagellatus (strain ATCC 51484 / DSM 6875 / VKM B-1610 / KT).